We begin with the raw amino-acid sequence, 369 residues long: Queuine tRNA-ribosyltransferase (369 aa).

Catalysis depends on Asp-89, which acts as the Proton acceptor. Substrate is bound by residues 89 to 93, Asp-142, Gln-184, and Gly-211; that span reads DSGGF. The tract at residues 242-248 is RNA binding; sequence GGGSPEL. The active-site Nucleophile is Asp-261. An RNA binding; important for wobble base 34 recognition region spans residues 266-270; sequence TRIAR. Residues Cys-299, Cys-301, Cys-304, and His-330 each contribute to the Zn(2+) site.

The protein belongs to the queuine tRNA-ribosyltransferase family. As to quaternary structure, homodimer. Within each dimer, one monomer is responsible for RNA recognition and catalysis, while the other monomer binds to the replacement base PreQ1. Zn(2+) serves as cofactor.

The enzyme catalyses 7-aminomethyl-7-carbaguanine + guanosine(34) in tRNA = 7-aminomethyl-7-carbaguanosine(34) in tRNA + guanine. Its pathway is tRNA modification; tRNA-queuosine biosynthesis. Its function is as follows. Catalyzes the base-exchange of a guanine (G) residue with the queuine precursor 7-aminomethyl-7-deazaguanine (PreQ1) at position 34 (anticodon wobble position) in tRNAs with GU(N) anticodons (tRNA-Asp, -Asn, -His and -Tyr). Catalysis occurs through a double-displacement mechanism. The nucleophile active site attacks the C1' of nucleotide 34 to detach the guanine base from the RNA, forming a covalent enzyme-RNA intermediate. The proton acceptor active site deprotonates the incoming PreQ1, allowing a nucleophilic attack on the C1' of the ribose to form the product. After dissociation, two additional enzymatic reactions on the tRNA convert PreQ1 to queuine (Q), resulting in the hypermodified nucleoside queuosine (7-(((4,5-cis-dihydroxy-2-cyclopenten-1-yl)amino)methyl)-7-deazaguanosine). The sequence is that of Queuine tRNA-ribosyltransferase from Thermotoga neapolitana (strain ATCC 49049 / DSM 4359 / NBRC 107923 / NS-E).